A 129-amino-acid polypeptide reads, in one-letter code: MSGRGKQGGKVRAKAKSRSSRAGLQFPVGRVHRLLRKGNYAERVGAGAPVYLAAVLEYLTAEILELAGNAARDNKKTRIIPRHLQLAIRNDEELNKLLGKVTIAQGGVLPNIQAVLLPKKTESQKTKSK.

Positions 1-22 (MSGRGKQGGKVRAKAKSRSSRA) are disordered. N6-acetyllysine is present on residues Lys6 and Lys10. The segment covering 7–19 (QGGKVRAKAKSRS) has biased composition (basic residues). Lys10 is subject to N6-lactoyllysine; alternate. At Gln105 the chain carries N5-methylglutamine. Thr121 is modified (phosphothreonine; by DCAF1).

The protein belongs to the histone H2A family. In terms of assembly, the nucleosome is a histone octamer containing two molecules each of H2A, H2B, H3 and H4 assembled in one H3-H4 heterotetramer and two H2A-H2B heterodimers. The octamer wraps approximately 147 bp of DNA. Glutamine methylation at Gln-105 (H2AQ104me) by FBL is specifically dedicated to polymerase I. It is present at 35S ribosomal DNA locus and impairs binding of the FACT complex. In terms of processing, monoubiquitination of Lys-120 (H2AXK119ub) gives a specific tag for epigenetic transcriptional repression. Following DNA double-strand breaks (DSBs), it is ubiquitinated through 'Lys-63' linkage of ubiquitin moieties. Post-translationally, phosphorylation on Ser-2 (H2AS1ph) is enhanced during mitosis. Phosphorylation on Ser-2 by RPS6KA5/MSK1 directly represses transcription. Acetylation of H3 inhibits Ser-2 phosphorylation by RPS6KA5/MSK1. Phosphorylation at Thr-121 (H2AT120ph) by DCAF1 is present in the regulatory region of many tumor suppresor genes and down-regulates their transcription.

The protein resides in the nucleus. The protein localises to the chromosome. In terms of biological role, core component of nucleosome. Nucleosomes wrap and compact DNA into chromatin, limiting DNA accessibility to the cellular machineries which require DNA as a template. Histones thereby play a central role in transcription regulation, DNA repair, DNA replication and chromosomal stability. DNA accessibility is regulated via a complex set of post-translational modifications of histones, also called histone code, and nucleosome remodeling. In Bos taurus (Bovine), this protein is Histone H2A.J.